The primary structure comprises 371 residues: MVCKHFGSCGSCALYNQNYTQQLQLKEQRVSELLSPFYTGELELFDSPDSRYRARAEFRIWHESERCDYAMGNIEKKGAVTIEECPKVIEPIEKRMWKLLEKINASQEVLKQRLFAVEFLATTTDECLVTMLYHRKLDEAWSEEAKMLERELNCRVMGRSRKQKVILSDEFVTETLEIDGKEFTYVQYESGFTQPNPAVNVKMIEWAIWQAKKVGYGDFLESYCGLGNFTLPLSHYFDNVLATEISKRSIHAALQNCELNAVENITFARLASEEMTEALNGVREFSRLKGIDLKSYDFSTVLVDPPRAGLDEGTIELISNIDNIIYISCNPETLARDLETLIKTHTVMEAALFDQFPHTEHVESGVFLQKK.

S-adenosyl-L-methionine is bound by residues Gln-194, Tyr-223, Asn-228, Glu-244, and Asp-304. The Nucleophile role is filled by Cys-329. The Proton acceptor role is filled by Glu-363.

It belongs to the class I-like SAM-binding methyltransferase superfamily. RNA M5U methyltransferase family. TrmA subfamily.

The catalysed reaction is uridine(54) in tRNA + S-adenosyl-L-methionine = 5-methyluridine(54) in tRNA + S-adenosyl-L-homocysteine + H(+). It carries out the reaction uridine(341) in tmRNA + S-adenosyl-L-methionine = 5-methyluridine(341) in tmRNA + S-adenosyl-L-homocysteine + H(+). Functionally, dual-specificity methyltransferase that catalyzes the formation of 5-methyluridine at position 54 (m5U54) in all tRNAs, and that of position 341 (m5U341) in tmRNA (transfer-mRNA). This is tRNA/tmRNA (uracil-C(5))-methyltransferase from Sulfurovum sp. (strain NBC37-1).